The chain runs to 103 residues: N(4)-acetylcytidine amidohydrolase (103 aa).

The ASCH domain occupies 6–94; it reads ITFFQRFQND…IAEIYPNQTQ (89 aa). The active-site Proton acceptor is K21. The active-site Nucleophile is the T24. Catalysis depends on E74, which acts as the Proton donor.

This sequence belongs to the N(4)-acetylcytidine amidohydrolase family.

It catalyses the reaction N(4)-acetylcytidine + H2O = cytidine + acetate + H(+). It carries out the reaction N(4)-acetyl-2'-deoxycytidine + H2O = 2'-deoxycytidine + acetate + H(+). The catalysed reaction is N(4)-acetylcytosine + H2O = cytosine + acetate + H(+). Functionally, catalyzes the hydrolysis of N(4)-acetylcytidine (ac4C). This is N(4)-acetylcytidine amidohydrolase (yqfB) from Salmonella schwarzengrund (strain CVM19633).